Reading from the N-terminus, the 163-residue chain is Lipoprotein signal peptidase (163 aa).

The next 3 helical transmembrane spans lie at 4–24, 66–86, and 92–112; these read SAALFCRPVPAILFILSLLIL, LDAWVIVVMRLAIVAFVAWLW, and DHQFAHLGYCLIIAGAFGNII. Residues aspartate 122 and aspartate 140 contribute to the active site. The chain crosses the membrane as a helical span at residues 132–152; it reads SFAVFNLADSLITIGAGFILL.

This sequence belongs to the peptidase A8 family.

The protein localises to the cell inner membrane. It carries out the reaction Release of signal peptides from bacterial membrane prolipoproteins. Hydrolyzes -Xaa-Yaa-Zaa-|-(S,diacylglyceryl)Cys-, in which Xaa is hydrophobic (preferably Leu), and Yaa (Ala or Ser) and Zaa (Gly or Ala) have small, neutral side chains.. It participates in protein modification; lipoprotein biosynthesis (signal peptide cleavage). This protein specifically catalyzes the removal of signal peptides from prolipoproteins. In Allorhizobium ampelinum (strain ATCC BAA-846 / DSM 112012 / S4) (Agrobacterium vitis (strain S4)), this protein is Lipoprotein signal peptidase.